A 336-amino-acid chain; its full sequence is Holliday junction branch migration complex subunit RuvB (336 aa).

Residues 1–182 (MKERIVNLET…FGMSFRMQFY (182 aa)) are large ATPase domain (RuvB-L). ATP-binding positions include L21, R22, G63, K66, T67, S68, 129–131 (EDF), R172, Y182, and R219. Residue T67 coordinates Mg(2+). A small ATPAse domain (RuvB-S) region spans residues 183–253 (SPSELALIIK…ITLHALNELG (71 aa)). The tract at residues 256 to 336 (ELGFDEADLA…IPTLNPQTLF (81 aa)) is head domain (RuvB-H). DNA contacts are provided by R310 and R315.

Belongs to the RuvB family. In terms of assembly, homohexamer. Forms an RuvA(8)-RuvB(12)-Holliday junction (HJ) complex. HJ DNA is sandwiched between 2 RuvA tetramers; dsDNA enters through RuvA and exits via RuvB. An RuvB hexamer assembles on each DNA strand where it exits the tetramer. Each RuvB hexamer is contacted by two RuvA subunits (via domain III) on 2 adjacent RuvB subunits; this complex drives branch migration. In the full resolvosome a probable DNA-RuvA(4)-RuvB(12)-RuvC(2) complex forms which resolves the HJ.

It localises to the cytoplasm. The catalysed reaction is ATP + H2O = ADP + phosphate + H(+). The RuvA-RuvB-RuvC complex processes Holliday junction (HJ) DNA during genetic recombination and DNA repair, while the RuvA-RuvB complex plays an important role in the rescue of blocked DNA replication forks via replication fork reversal (RFR). RuvA specifically binds to HJ cruciform DNA, conferring on it an open structure. The RuvB hexamer acts as an ATP-dependent pump, pulling dsDNA into and through the RuvAB complex. RuvB forms 2 homohexamers on either side of HJ DNA bound by 1 or 2 RuvA tetramers; 4 subunits per hexamer contact DNA at a time. Coordinated motions by a converter formed by DNA-disengaged RuvB subunits stimulates ATP hydrolysis and nucleotide exchange. Immobilization of the converter enables RuvB to convert the ATP-contained energy into a lever motion, pulling 2 nucleotides of DNA out of the RuvA tetramer per ATP hydrolyzed, thus driving DNA branch migration. The RuvB motors rotate together with the DNA substrate, which together with the progressing nucleotide cycle form the mechanistic basis for DNA recombination by continuous HJ branch migration. Branch migration allows RuvC to scan DNA until it finds its consensus sequence, where it cleaves and resolves cruciform DNA. The polypeptide is Holliday junction branch migration complex subunit RuvB (Helicobacter pylori (strain Shi470)).